Here is a 219-residue protein sequence, read N- to C-terminus: Large ribosomal subunit protein uL4 (219 aa).

Positions 45–103 (ARRQGTHATKTRGQVRGGGRKPYRQKGTGRARQGSIRAPQFTGGGTVHGPQPRDYDQRT) are disordered. Positions 62–73 (GGRKPYRQKGTG) are enriched in basic residues.

Belongs to the universal ribosomal protein uL4 family. Part of the 50S ribosomal subunit.

Its function is as follows. One of the primary rRNA binding proteins, this protein initially binds near the 5'-end of the 23S rRNA. It is important during the early stages of 50S assembly. It makes multiple contacts with different domains of the 23S rRNA in the assembled 50S subunit and ribosome. Forms part of the polypeptide exit tunnel. This Corynebacterium kroppenstedtii (strain DSM 44385 / JCM 11950 / CIP 105744 / CCUG 35717) protein is Large ribosomal subunit protein uL4.